A 383-amino-acid polypeptide reads, in one-letter code: Succinyl-diaminopimelate desuccinylase (383 aa).

His69 is a Zn(2+) binding site. Asp71 is an active-site residue. Asp103 is a Zn(2+) binding site. The active-site Proton acceptor is Glu137. The Zn(2+) site is built by Glu138, Glu166, and His357.

The protein belongs to the peptidase M20A family. DapE subfamily. As to quaternary structure, homodimer. Requires Zn(2+) as cofactor. The cofactor is Co(2+).

It carries out the reaction N-succinyl-(2S,6S)-2,6-diaminopimelate + H2O = (2S,6S)-2,6-diaminopimelate + succinate. It functions in the pathway amino-acid biosynthesis; L-lysine biosynthesis via DAP pathway; LL-2,6-diaminopimelate from (S)-tetrahydrodipicolinate (succinylase route): step 3/3. In terms of biological role, catalyzes the hydrolysis of N-succinyl-L,L-diaminopimelic acid (SDAP), forming succinate and LL-2,6-diaminopimelate (DAP), an intermediate involved in the bacterial biosynthesis of lysine and meso-diaminopimelic acid, an essential component of bacterial cell walls. The chain is Succinyl-diaminopimelate desuccinylase from Rickettsia typhi (strain ATCC VR-144 / Wilmington).